Here is a 312-residue protein sequence, read N- to C-terminus: DNA primase small subunit PriS (312 aa).

Catalysis depends on residues Asp88, Asp90, and Asp215.

This sequence belongs to the eukaryotic-type primase small subunit family. Heterodimer of a small subunit (PriS) and a large subunit (PriL). Requires Mg(2+) as cofactor. Mn(2+) is required as a cofactor.

In terms of biological role, catalytic subunit of DNA primase, an RNA polymerase that catalyzes the synthesis of short RNA molecules used as primers for DNA polymerase during DNA replication. The small subunit contains the primase catalytic core and has DNA synthesis activity on its own. Binding to the large subunit stabilizes and modulates the activity, increasing the rate of DNA synthesis while decreasing the length of the DNA fragments, and conferring RNA synthesis capability. The DNA polymerase activity may enable DNA primase to also catalyze primer extension after primer synthesis. May also play a role in DNA repair. The chain is DNA primase small subunit PriS from Pyrobaculum arsenaticum (strain DSM 13514 / JCM 11321 / PZ6).